Reading from the N-terminus, the 89-residue chain is Elongation factor 1-beta (89 aa).

This sequence belongs to the EF-1-beta/EF-1-delta family.

Its function is as follows. Promotes the exchange of GDP for GTP in EF-1-alpha/GDP, thus allowing the regeneration of EF-1-alpha/GTP that could then be used to form the ternary complex EF-1-alpha/GTP/AAtRNA. The chain is Elongation factor 1-beta from Methanococcus maripaludis (strain C6 / ATCC BAA-1332).